The chain runs to 515 residues: Proline--tRNA ligase (515 aa).

Belongs to the class-II aminoacyl-tRNA synthetase family. ProS type 3 subfamily. As to quaternary structure, homodimer.

The protein localises to the cytoplasm. It carries out the reaction tRNA(Pro) + L-proline + ATP = L-prolyl-tRNA(Pro) + AMP + diphosphate. Its function is as follows. Catalyzes the attachment of proline to tRNA(Pro) in a two-step reaction: proline is first activated by ATP to form Pro-AMP and then transferred to the acceptor end of tRNA(Pro). The sequence is that of Proline--tRNA ligase from Novosphingobium aromaticivorans (strain ATCC 700278 / DSM 12444 / CCUG 56034 / CIP 105152 / NBRC 16084 / F199).